The following is a 269-amino-acid chain: 3-methyl-2-oxobutanoate hydroxymethyltransferase (269 aa).

The Mg(2+) site is built by Asp-50 and Asp-89. 3-methyl-2-oxobutanoate-binding positions include 50-51 (DS), Asp-89, and Lys-119. Glu-121 lines the Mg(2+) pocket. The Proton acceptor role is filled by Glu-187.

This sequence belongs to the PanB family. In terms of assembly, homodecamer; pentamer of dimers. Mg(2+) serves as cofactor.

It is found in the cytoplasm. The catalysed reaction is 3-methyl-2-oxobutanoate + (6R)-5,10-methylene-5,6,7,8-tetrahydrofolate + H2O = 2-dehydropantoate + (6S)-5,6,7,8-tetrahydrofolate. The protein operates within cofactor biosynthesis; (R)-pantothenate biosynthesis; (R)-pantoate from 3-methyl-2-oxobutanoate: step 1/2. In terms of biological role, catalyzes the reversible reaction in which hydroxymethyl group from 5,10-methylenetetrahydrofolate is transferred onto alpha-ketoisovalerate to form ketopantoate. The polypeptide is 3-methyl-2-oxobutanoate hydroxymethyltransferase (Corynebacterium efficiens (strain DSM 44549 / YS-314 / AJ 12310 / JCM 11189 / NBRC 100395)).